Consider the following 251-residue polypeptide: Zinc import ATP-binding protein ZnuC (251 aa).

Positions 5–220 (VSLENVSVSF…PEFISMFGPR (216 aa)) constitute an ABC transporter domain. Residue 37-44 (GPNGAGKS) participates in ATP binding.

Belongs to the ABC transporter superfamily. Zinc importer (TC 3.A.1.15.5) family. As to quaternary structure, the complex is composed of two ATP-binding proteins (ZnuC), two transmembrane proteins (ZnuB) and a solute-binding protein (ZnuA).

It is found in the cell inner membrane. It catalyses the reaction Zn(2+)(out) + ATP(in) + H2O(in) = Zn(2+)(in) + ADP(in) + phosphate(in) + H(+)(in). Part of the ABC transporter complex ZnuABC involved in zinc import. Responsible for energy coupling to the transport system. The chain is Zinc import ATP-binding protein ZnuC from Escherichia coli O157:H7.